Consider the following 286-residue polypeptide: Meteorin-like protein (286 aa).

The first 21 residues, 1–21 (MLSPFLAYLLSVVLLCRIARS), serve as a signal peptide directing secretion. Cystine bridges form between cysteine 28–cysteine 51, cysteine 84–cysteine 120, cysteine 165–cysteine 235, cysteine 168–cysteine 259, and cysteine 178–cysteine 281.

The protein belongs to the meteorin family.

It is found in the secreted. Hormone induced following exercise or cold exposure that promotes energy expenditure. Induced either in the skeletal muscle after exercise or in adipose tissue following cold exposure and is present in the circulation. Able to stimulate energy expenditure associated with the browning of the white fat depots and improves glucose tolerance. The polypeptide is Meteorin-like protein (metrnl) (Danio rerio (Zebrafish)).